Reading from the N-terminus, the 106-residue chain is Large ribosomal subunit protein eL42 (106 aa).

It belongs to the eukaryotic ribosomal protein eL42 family.

The chain is Large ribosomal subunit protein eL42 (RPL44) from Candida tropicalis (Yeast).